The chain runs to 299 residues: Small ribosomal subunit biogenesis GTPase RsgA (299 aa).

In terms of domain architecture, CP-type G spans 73–232; the sequence is CSWLTRPQVA…VADTPGFNRP (160 aa). GTP is bound by residues 122 to 125 and 174 to 182; these read TKGD and GPSGVGKSS. Residues cysteine 257, cysteine 262, histidine 264, and cysteine 270 each contribute to the Zn(2+) site.

The protein belongs to the TRAFAC class YlqF/YawG GTPase family. RsgA subfamily. As to quaternary structure, monomer. Associates with 30S ribosomal subunit, binds 16S rRNA. It depends on Zn(2+) as a cofactor.

It is found in the cytoplasm. Its function is as follows. One of several proteins that assist in the late maturation steps of the functional core of the 30S ribosomal subunit. Helps release RbfA from mature subunits. May play a role in the assembly of ribosomal proteins into the subunit. Circularly permuted GTPase that catalyzes slow GTP hydrolysis, GTPase activity is stimulated by the 30S ribosomal subunit. This is Small ribosomal subunit biogenesis GTPase RsgA from Parasynechococcus marenigrum (strain WH8102).